The following is a 46-amino-acid chain: VEAEHMCMTMRGVKKPGAKTVTSAVRGTFANVAAARAEVLSFIKND.

Position 7 (Cys-7) interacts with Zn(2+).

Belongs to the GTP cyclohydrolase I family. Homomer.

The catalysed reaction is GTP + H2O = 7,8-dihydroneopterin 3'-triphosphate + formate + H(+). Its pathway is cofactor biosynthesis; 7,8-dihydroneopterin triphosphate biosynthesis; 7,8-dihydroneopterin triphosphate from GTP: step 1/1. The protein is GTP cyclohydrolase 1 (folE) of Bacillus pumilus (Bacillus mesentericus).